The chain runs to 350 residues: Ion-translocating oxidoreductase complex subunit D (350 aa).

3 helical membrane passes run 20–39, 89–109, and 123–143; these read IMML…WYFF, IPPL…VIIA, and PAMI…TNWL. Thr187 carries the FMN phosphoryl threonine modification. 5 consecutive transmembrane segments (helical) span residues 215 to 235, 244 to 264, 267 to 287, 301 to 321, and 322 to 342; these read LAGL…LFLL, IPVS…LIAP, FLSP…FFIL, LVFG…GGYP, and DGVA…DYYT.

The protein belongs to the NqrB/RnfD family. The complex is composed of six subunits: RnfA, RnfB, RnfC, RnfD, RnfE and RnfG. FMN serves as cofactor.

The protein resides in the cell inner membrane. Functionally, part of a membrane-bound complex that couples electron transfer with translocation of ions across the membrane. This is Ion-translocating oxidoreductase complex subunit D from Cronobacter sakazakii (strain ATCC BAA-894) (Enterobacter sakazakii).